The following is a 162-amino-acid chain: Neuritin-like protein (162 aa).

The signal sequence occupies residues 1–32; sequence MMCNCCHCHWRRRCQRLPCALTLLLLLPLAVA. Residue Ala-136 is the site of GPI-anchor amidated alanine attachment. The propeptide at 137-162 is removed in mature form; that stretch reads PALAPAPAPVLLAAALALACLLGPLA.

This sequence belongs to the neuritin family.

It is found in the cell membrane. This chain is Neuritin-like protein (Nrn1l), found in Mus musculus (Mouse).